Consider the following 556-residue polypeptide: MRFLTKFLLFLATVYFGLKYACESPLRAQYPQLQLACHYSQPALWNDYLLKNSPAYKNSVHPQLVVAKGKYEELVQPHVKDVCKRVHTQLDRIDKKKYCDLAHSYANLAYQKAQFYYSISAGKYVHDFCKSDLYNKNLKRHVERAKEDLSKAYHLAVVRIPQLFTRENVEKFTSSASAYINEKTESLKKEAKQITSDVKKTVESEIKKRTTSSESEEEPIVSTSTIVKTITRTRHSSSSTTSTKSAEETSEKNLETKEEEDITDIEIDHQAQLQRDFDKWTSNIDKKVKMVNKMLVRDVKKHLKPKIDANDKLFKDKLKVLHKEANDNFQLINKAIQDINCTQGIDPETGKQIYFDSEGKSQIEKYITREMIRTMLNDTQTTLNSLVADIENDVSKILEDFKKIAENSREQHLTTFEEWGDIMINEWSKKLAYLDVLAPHEDAEHEGKSKTELSEKNWKKFMAIKKQILDARDKMAKRQIKISEFKLLLDNVQNTLQAVTNENGEYLYILRAQANLAFQERERLEKEAEEAKLRKEAGEVNESSEEEQIVEEPISA.

The first 21 residues, 1–21 (MRFLTKFLLFLATVYFGLKYA), serve as a signal peptide directing secretion. Positions 135-201 (NKNLKRHVER…KQITSDVKKT (67 aa)) form a coiled coil. The segment covering 190–208 (EAKQITSDVKKTVESEIKK) has biased composition (basic and acidic residues). Disordered stretches follow at residues 190–263 (EAKQ…EDIT) and 534–556 (RKEAGEVNESSEEEQIVEEPISA). The segment covering 220–244 (IVSTSTIVKTITRTRHSSSSTTSTK) has biased composition (low complexity). Over residues 245–256 (SAEETSEKNLET) the composition is skewed to basic and acidic residues. A coiled-coil region spans residues 481-547 (KISEFKLLLD…GEVNESSEEE (67 aa)).

The protein belongs to the SHE10 family. Component of the mitochondria-localized RNase mitochondrial RNA-processing (RNase MRP) composed of one single RNA encoded by the NME1 gene and at least 31 proteins. Absent in the nucleus-localized RNase MRP (NuMRP).

Its subcellular location is the mitochondrion. Functionally, involved in spore wall assembly. May be a component of the mitochondrial RNase MRP (MtMRP), a ribonucleoprotein endoribonuclease involved in the cleaving RNA transcripts to generate primers for DNA replication in mitochondria. In Candida glabrata (strain ATCC 2001 / BCRC 20586 / JCM 3761 / NBRC 0622 / NRRL Y-65 / CBS 138) (Yeast), this protein is Outer spore wall assembly protein SHE10.